The primary structure comprises 141 residues: MEAAQQKNESVMDYAPDWTQISVLFFVVMGGGVLASLSALALAGTVVLMLILTPVFLLLSPVILPVGAVIALAAAAFMAAVTIGIAGAAALIWVYRYARGQPTVGSEKIDRARVRLFEAAEKLKAQLQYKLFNENSKANFD.

A run of 3 helical transmembrane segments spans residues 23-43 (VLFFVVMGGGVLASLSALALA), 46-66 (VVLMLILTPVFLLLSPVILPV), and 74-94 (AAAFMAAVTIGIAGAAALIWV). Positions 54–65 (PVFLLLSPVILP) match the Proline-knot motif.

Belongs to the oleosin family. Expressed in megagametophytes (at protein level).

Its subcellular location is the lipid droplet. It localises to the membrane. The chain is Oleosin L from Pinus massoniana (Chinese red pine).